We begin with the raw amino-acid sequence, 297 residues long: UDP-N-acetylenolpyruvoylglucosamine reductase (297 aa).

One can recognise an FAD-binding PCMH-type domain in the interval 22–195 (RVGGPAQYYA…LAGRFRLHRA (174 aa)). R169 is an active-site residue. S223 acts as the Proton donor in catalysis. Residue E293 is part of the active site.

The protein belongs to the MurB family. Requires FAD as cofactor.

Its subcellular location is the cytoplasm. The catalysed reaction is UDP-N-acetyl-alpha-D-muramate + NADP(+) = UDP-N-acetyl-3-O-(1-carboxyvinyl)-alpha-D-glucosamine + NADPH + H(+). Its pathway is cell wall biogenesis; peptidoglycan biosynthesis. In terms of biological role, cell wall formation. This Chloroflexus aggregans (strain MD-66 / DSM 9485) protein is UDP-N-acetylenolpyruvoylglucosamine reductase.